We begin with the raw amino-acid sequence, 205 residues long: MAATFRGTTPVPPDARPRLTVLSGPSGVGKSTVVAHLRTVHPEVWLSVSATTRKPRPGEQHGVQYFFVDDEEFDKLVANGELLEWAEFAGNRYGTPRKAVLDRLEAGEPVLLEIDLQGARQVRESMADAHLVFLAPPSWEELVRRLTGRGTEAPEIIERRLAAAKVELAAETEFDVTLVNTSVEDVSRELLALMLRQSGERDISG.

The 179-residue stretch at 17 to 195 folds into the Guanylate kinase-like domain; that stretch reads PRLTVLSGPS…VSRELLALML (179 aa). Position 24–31 (24–31) interacts with ATP; the sequence is GPSGVGKS.

Belongs to the guanylate kinase family.

Its subcellular location is the cytoplasm. It catalyses the reaction GMP + ATP = GDP + ADP. Functionally, essential for recycling GMP and indirectly, cGMP. In Streptomyces kasugaensis, this protein is Guanylate kinase.